A 1011-amino-acid chain; its full sequence is MKLTKAVFRFRRTNLSTLLVITYLVITTLYVWDHFRYHFTLPSDYNYAQMLADAWLDLEIITQYPHPYASHANDKVHDYLLDRVKEITRDSMFAEISDDYGMGLRTLFRQEDAISGTKESTVVYYESSNVLARVQGRNSALDGLLLSAHYDSVPSGYGATDDGMGVVSMLAILTHYVKNQPERTLVFNFNNNQEFGLAGASAFFEHPWSKEISYVINLEGTGAGGKAVLFRTSDVSTAQVYAEAVRQQPFGNSMYQQGFYNGHIGTETDFQVYEDQGLRGWDIAFYRPRNLYHTAKDTVLYTSKQALWHMLHTALQLTDYMAINKPDMEDTSNAVYFDLFGKWFVVWSARSLFYWNCIILALFPSILAILFLVAYDMQLLKFNFWDAMLRLPVSVCLAYFCVKLFQVLVGQLNPYVFSRDYVSPILAEASMFIFMNYVILSSWERLRPLRDFKTVALVEVSMVLWIYLISVTRWLRDSDYTATGLYPFTIGYTFVSIGAIIGVFCATFKAKLNPEDDSYVGDSKVDIEQQQMLMQHQYQQHSQKHSNQHSPHHSTHHSAQHSVHHSPRQSIHQVPSSEQRQRDASETPHVIISVDHTAGHQEDSEVTPLLNTGTVAPFPKPVPERVSRKSFLRNVVTSILNYDWSIQFMVVTPWVTYFTWICLDLIMGAMNQTIQESAKGTTFVTHMALIGSLLLSLPMLPFTYKLHSFAGMLFLLLAVTTAVWTIVAPPFTESSPLKLRFLQTIDLDKNNSSSVYLYGRERTFMEPILDDIPSVTKYRCVEYAGDGVDICEYNGMPPRMFNNHHEAESDWTKIMTLEILKDDRNSTSRTPYQPITAELKINVEENRVCTLNFNSTAFKNWKQGVSPLREVVILHENPSSNVTPSFYNTAMKNGYYQDEFGNDHYRWNNGITELQLHKLDFKRGYYKIGLEWIPQLLYRGYDPATSSSEEDDALGVSVTCYWGEYDTDSITDGFATTNVPAYDELRKYSPKNIIYSSKEKGMVSVTKYVEL.

Over 1 to 14 the chain is Cytoplasmic; it reads MKLTKAVFRFRRTN. Residues 15 to 35 form a helical membrane-spanning segment; it reads LSTLLVITYLVITTLYVWDHF. The Vacuolar portion of the chain corresponds to 36–352; the sequence is RYHFTLPSDY…WFVVWSARSL (317 aa). The Zn(2+) site is built by His-149, Asp-161, Glu-194, Glu-219, and His-293. A helical membrane pass occupies residues 353-373; that stretch reads FYWNCIILALFPSILAILFLV. Residues 374 to 390 lie on the Cytoplasmic side of the membrane; the sequence is AYDMQLLKFNFWDAMLR. Residues 391 to 411 traverse the membrane as a helical segment; sequence LPVSVCLAYFCVKLFQVLVGQ. Topologically, residues 412-420 are vacuolar; sequence LNPYVFSRD. The chain crosses the membrane as a helical span at residues 421–441; that stretch reads YVSPILAEASMFIFMNYVILS. Residues 442–451 are Cytoplasmic-facing; that stretch reads SWERLRPLRD. The chain crosses the membrane as a helical span at residues 452–472; the sequence is FKTVALVEVSMVLWIYLISVT. At 473–487 the chain is on the vacuolar side; the sequence is RWLRDSDYTATGLYP. The chain crosses the membrane as a helical span at residues 488–508; that stretch reads FTIGYTFVSIGAIIGVFCATF. The Cytoplasmic segment spans residues 509 to 647; the sequence is KAKLNPEDDS…SILNYDWSIQ (139 aa). A disordered region spans residues 534 to 585; sequence MQHQYQQHSQKHSNQHSPHHSTHHSAQHSVHHSPRQSIHQVPSSEQRQRDAS. Residues 542 to 567 show a composition bias toward basic residues; sequence SQKHSNQHSPHHSTHHSAQHSVHHSP. Positions 568–578 are enriched in polar residues; the sequence is RQSIHQVPSSE. A helical transmembrane segment spans residues 648-668; sequence FMVVTPWVTYFTWICLDLIMG. Residues 669–681 lie on the Vacuolar side of the membrane; the sequence is AMNQTIQESAKGT. An N-linked (GlcNAc...) asparagine glycan is attached at Asn-671. A helical transmembrane segment spans residues 682–702; that stretch reads TFVTHMALIGSLLLSLPMLPF. The Cytoplasmic segment spans residues 703–708; sequence TYKLHS. Residues 709 to 729 traverse the membrane as a helical segment; the sequence is FAGMLFLLLAVTTAVWTIVAP. Over 730–1011 the chain is Vacuolar; that stretch reads PFTESSPLKL…MVSVTKYVEL (282 aa). N-linked (GlcNAc...) asparagine glycosylation is found at Asn-751, Asn-825, and Asn-854.

Belongs to the peptidase M28 family. Zn(2+) is required as a cofactor.

The protein resides in the vacuole membrane. Functionally, may be involved in vacuolar sorting and osmoregulation. In Eremothecium gossypii (strain ATCC 10895 / CBS 109.51 / FGSC 9923 / NRRL Y-1056) (Yeast), this protein is Vacuolar membrane protease.